Consider the following 150-residue polypeptide: UPF0756 membrane protein PM0771 (150 aa).

4 helical membrane-spanning segments follow: residues 12–34, 52–72, 79–99, and 123–143; these read LVVLILLGVLSNNSSVTISAAIL, HGITLGIIILTIGVLSPIVSG, LAVFLNWKMWLAVAVGLLVAW, and ILGVAFVGGIPVGPLIAAGIL.

Belongs to the UPF0756 family.

Its subcellular location is the cell membrane. The sequence is that of UPF0756 membrane protein PM0771 from Pasteurella multocida (strain Pm70).